The following is a 1882-amino-acid chain: uncharacterized protein (1882 aa).

The chain crosses the membrane as a helical span at residues 16-36 (FFLLFGIIFVLFSIIFLETSI). Disordered stretches follow at residues 103 to 129 (DFGSDSEKKDSTTKSSDNNPRKGDVND), 220 to 306 (FPGD…ESET), 492 to 513 (VALAQQQQDKQESSADDGVKDP), and 658 to 698 (QTDE…TKST). Positions 221 to 239 (PGDKGKGEDKKTTKKKSEI) are enriched in basic and acidic residues. The span at 240–249 (KQASSATTVL) shows a compositional bias: polar residues. Basic and acidic residues-rich tracts occupy residues 259–275 (TDAKETTNNEEPKKDSN), 284–294 (NKDKVWFKSDE), and 500–511 (DKQESSADDGVK). Over residues 667–698 (AKTTQGTTDSLTQLADASSSSSSSSTGDTKST) the composition is skewed to low complexity. The next 4 membrane-spanning stretches (helical) occupy residues 987-1007 (ASVVIAAFLSILALYLTILLI), 1037-1057 (VFAGIVALASSFFGVLFAFLL), 1080-1100 (WISFFGSMLLIFVIFQFISWI), and 1154-1174 (LFTYVGLSSIALLLIGIAGTI). 2 disordered regions span residues 1233–1253 (DQIQQQQQQQQQQGNDKEHPY) and 1572–1598 (KDGQSTDDSGGTSSGGGSCGGGSTSST). Low complexity predominate over residues 1234-1245 (QIQQQQQQQQQQ). The segment covering 1583 to 1594 (TSSGGGSCGGGS) has biased composition (gly residues). Transmembrane regions (helical) follow at residues 1759–1779 (FLLGTIIPFIFITCVVLGISM), 1807–1827 (FFIPAFVLSLLISIAILAGLL), 1828–1848 (VGVQALVFGVAQVFLTNVFEF), and 1851–1871 (YMVGIVLFGATIFVIGSYFWI).

It belongs to the ABC-4 integral membrane protein family.

Its subcellular location is the cell membrane. This is an uncharacterized protein from Mycoplasma pneumoniae (strain ATCC 29342 / M129 / Subtype 1) (Mycoplasmoides pneumoniae).